Consider the following 238-residue polypeptide: Phosphoribosylaminoimidazole-succinocarboxamide synthase (238 aa).

It belongs to the SAICAR synthetase family.

The catalysed reaction is 5-amino-1-(5-phospho-D-ribosyl)imidazole-4-carboxylate + L-aspartate + ATP = (2S)-2-[5-amino-1-(5-phospho-beta-D-ribosyl)imidazole-4-carboxamido]succinate + ADP + phosphate + 2 H(+). It participates in purine metabolism; IMP biosynthesis via de novo pathway; 5-amino-1-(5-phospho-D-ribosyl)imidazole-4-carboxamide from 5-amino-1-(5-phospho-D-ribosyl)imidazole-4-carboxylate: step 1/2. This is Phosphoribosylaminoimidazole-succinocarboxamide synthase from Nitrosococcus oceani (strain ATCC 19707 / BCRC 17464 / JCM 30415 / NCIMB 11848 / C-107).